The chain runs to 63 residues: Large ribosomal subunit protein uL29 (63 aa).

The protein belongs to the universal ribosomal protein uL29 family.

This chain is Large ribosomal subunit protein uL29, found in Aliarcobacter butzleri (strain RM4018) (Arcobacter butzleri).